The sequence spans 28 residues: M-poneritoxin-Dq4a (28 aa).

Ala-28 is subject to Alanine amide.

Expressed by the venom gland.

It is found in the secreted. The synthetic peptide has weak antimicrobial activity against Gram-negative bacterium E.coli ATCC 10536. It does not show antimicrobial activity against the Gram-positive bacteria B.amyloliquefacies S499, L.monocytogenes 2231 and S.aureus ATCC 29213, against the Gram-negative bacteria P.putida BTP1 and P.aeruginosa PaO1, or against the fungi S.cerevisiae, R.mucilaginosa, C.cucumerinum, F.oxysporum and B.cinerea. This is M-poneritoxin-Dq4a from Dinoponera quadriceps (South American ant).